A 365-amino-acid chain; its full sequence is Isopentenyl-diphosphate delta-isomerase (365 aa).

8–9 (RK) is a substrate binding site. FMN-binding positions include 67-69 (SIT), S97, and N126. 97 to 99 (SQR) is a binding site for substrate. Q160 contributes to the substrate binding site. E161 is a Mg(2+) binding site. Residues K192, T222, 272–274 (GIR), and 293–294 (AL) each bind FMN.

Belongs to the IPP isomerase type 2 family. Homooctamer. Dimer of tetramers. It depends on FMN as a cofactor. NADPH is required as a cofactor. Mg(2+) serves as cofactor.

The protein localises to the cytoplasm. It carries out the reaction isopentenyl diphosphate = dimethylallyl diphosphate. In terms of biological role, involved in the biosynthesis of isoprenoids. Catalyzes the 1,3-allylic rearrangement of the homoallylic substrate isopentenyl (IPP) to its allylic isomer, dimethylallyl diphosphate (DMAPP). The protein is Isopentenyl-diphosphate delta-isomerase of Methanosarcina mazei (strain ATCC BAA-159 / DSM 3647 / Goe1 / Go1 / JCM 11833 / OCM 88) (Methanosarcina frisia).